Consider the following 420-residue polypeptide: Acetylornithine aminotransferase (420 aa).

Pyridoxal 5'-phosphate is bound by residues 118–119 and F151; that span reads GA. R154 contacts N(2)-acetyl-L-ornithine. Residue 242 to 245 participates in pyridoxal 5'-phosphate binding; the sequence is DEVQ. K271 is subject to N6-(pyridoxal phosphate)lysine. Residue S298 coordinates N(2)-acetyl-L-ornithine. T299 contributes to the pyridoxal 5'-phosphate binding site.

The protein belongs to the class-III pyridoxal-phosphate-dependent aminotransferase family. ArgD subfamily. In terms of assembly, homodimer. The cofactor is pyridoxal 5'-phosphate.

It is found in the cytoplasm. The catalysed reaction is N(2)-acetyl-L-ornithine + 2-oxoglutarate = N-acetyl-L-glutamate 5-semialdehyde + L-glutamate. It participates in amino-acid biosynthesis; L-arginine biosynthesis; N(2)-acetyl-L-ornithine from L-glutamate: step 4/4. This Parasynechococcus marenigrum (strain WH8102) protein is Acetylornithine aminotransferase.